A 783-amino-acid chain; its full sequence is Probable galactinol--sucrose galactosyltransferase 5 (783 aa).

Residues Ser9 and Ser11 each carry the phosphoserine modification.

The protein belongs to the glycosyl hydrolases 36 family.

The enzyme catalyses alpha-D-galactosyl-(1-&gt;3)-1D-myo-inositol + sucrose = raffinose + myo-inositol. Transglycosidase operating by a ping-pong reaction mechanism. Involved in the synthesis of raffinose, a major soluble carbohydrate in seeds, roots and tubers. This Arabidopsis thaliana (Mouse-ear cress) protein is Probable galactinol--sucrose galactosyltransferase 5 (RFS5).